A 261-amino-acid chain; its full sequence is 4-hydroxy-tetrahydrodipicolinate reductase (261 aa).

NAD(+) is bound at residue 8–13; that stretch reads GYKGRM. Arg36 contributes to the NADP(+) binding site. NAD(+) is bound by residues 95 to 97 and 121 to 124; these read GTT and APNF. Catalysis depends on His151, which acts as the Proton donor/acceptor. His152 contacts (S)-2,3,4,5-tetrahydrodipicolinate. The active-site Proton donor is Lys155. 161 to 162 is a binding site for (S)-2,3,4,5-tetrahydrodipicolinate; sequence GT.

It belongs to the DapB family.

The protein localises to the cytoplasm. It carries out the reaction (S)-2,3,4,5-tetrahydrodipicolinate + NAD(+) + H2O = (2S,4S)-4-hydroxy-2,3,4,5-tetrahydrodipicolinate + NADH + H(+). It catalyses the reaction (S)-2,3,4,5-tetrahydrodipicolinate + NADP(+) + H2O = (2S,4S)-4-hydroxy-2,3,4,5-tetrahydrodipicolinate + NADPH + H(+). It participates in amino-acid biosynthesis; L-lysine biosynthesis via DAP pathway; (S)-tetrahydrodipicolinate from L-aspartate: step 4/4. In terms of biological role, catalyzes the conversion of 4-hydroxy-tetrahydrodipicolinate (HTPA) to tetrahydrodipicolinate. The protein is 4-hydroxy-tetrahydrodipicolinate reductase of Lactiplantibacillus plantarum (strain ATCC BAA-793 / NCIMB 8826 / WCFS1) (Lactobacillus plantarum).